The sequence spans 128 residues: MSGYTPEEKLRLQQLRELRRRWLKDQELSPREPVLPPQRVSPVERFWNKFLQDGALWKNVIYKTYRHSIFAFTHVLIPVWIIHYYLKYHVTTKPYTIVEKKPRIFPGDTILETGEVIPPMKEFPDQHH.

At Ser2 the chain carries N-acetylserine. Lys24 is modified (N6-acetyllysine). A helical transmembrane segment spans residues 64–86 (TYRHSIFAFTHVLIPVWIIHYYL).

The protein belongs to the complex I NDUFB6 subunit family. As to quaternary structure, complex I is composed of 45 different subunits.

It is found in the mitochondrion inner membrane. Functionally, accessory subunit of the mitochondrial membrane respiratory chain NADH dehydrogenase (Complex I), that is believed not to be involved in catalysis. Complex I functions in the transfer of electrons from NADH to the respiratory chain. The immediate electron acceptor for the enzyme is believed to be ubiquinone. In Bos taurus (Bovine), this protein is NADH dehydrogenase [ubiquinone] 1 beta subcomplex subunit 6 (NDUFB6).